Here is a 453-residue protein sequence, read N- to C-terminus: Anthocyanidin 3-O-glucosyltransferase (453 aa).

The active-site Proton acceptor is the H17. Position 17 (H17) interacts with an anthocyanidin. Residue D117 is the Charge relay of the active site. Residue T139 participates in UDP-alpha-D-glucose binding. H148 contacts an anthocyanidin. A331, Q333, H348, W351, N352, S353, and E356 together coordinate UDP-alpha-D-glucose. An an anthocyanidin-binding site is contributed by G371. UDP-alpha-D-glucose contacts are provided by D372 and Q373.

This sequence belongs to the UDP-glycosyltransferase family.

The catalysed reaction is an anthocyanidin + UDP-alpha-D-glucose + H(+) = an anthocyanidin 3-O-beta-D-glucoside + UDP. The enzyme catalyses delphinidin + UDP-alpha-D-glucose = delphinidin 3-O-beta-D-glucoside + UDP. It carries out the reaction pelargonidin + UDP-alpha-D-glucose = pelargonidin 3-O-beta-D-glucoside + UDP. It catalyses the reaction cyanidin + UDP-alpha-D-glucose = cyanidin 3-O-beta-D-glucoside + UDP + H(+). The protein operates within pigment biosynthesis; anthocyanin biosynthesis. In terms of biological role, in the presence of other necessary color factors, this glycosylation reaction allows the accumulation of anthocyanin pigments. Anthocyanidins are the preferred substrates, while flavonols are only a minor substrate in vitro. In Gentiana triflora (Clustered gentian), this protein is Anthocyanidin 3-O-glucosyltransferase.